The following is a 352-amino-acid chain: Geranylgeranyl transferase type-1 subunit beta (352 aa).

PFTB repeat units lie at residues 135 to 180 (VNKK…FILD), 187 to 228 (KESA…SLLG), 236 to 276 (FKEQ…MMID), and 283 to 325 (FASI…SFGN). Geranylgeranyl diphosphate is bound by residues 213–215 (HGG) and 255–258 (RTNK). Residues Asp261 and Cys263 each contribute to the Zn(2+) site. 264 to 267 (YAFW) provides a ligand contact to geranylgeranyl diphosphate. His313 lines the Zn(2+) pocket.

The protein belongs to the protein prenyltransferase subunit beta family. As to quaternary structure, heterodimer of an alpha and a beta subunit. It depends on Zn(2+) as a cofactor. Mg(2+) is required as a cofactor.

It catalyses the reaction geranylgeranyl diphosphate + L-cysteinyl-[protein] = S-geranylgeranyl-L-cysteinyl-[protein] + diphosphate. Its function is as follows. Catalyzes the transfer of a geranyl-geranyl moiety from geranyl-geranyl pyrophosphate to a cysteine at the fourth position from the C-terminus of proteins having the C-terminal sequence Cys-aliphatic-aliphatic-X. This Dictyostelium discoideum (Social amoeba) protein is Geranylgeranyl transferase type-1 subunit beta (pggt1b).